The sequence spans 140 residues: Transmembrane protein 107 (140 aa).

The next 2 membrane-spanning stretches (helical) occupy residues 7–27 (LVPS…TIFW) and 53–73 (LIIA…GFLS). Residue asparagine 79 is glycosylated (N-linked (GlcNAc...) asparagine). The next 2 helical transmembrane spans lie at 84-104 (LLSV…LFEG) and 113-133 (IMSF…IAVF).

The protein resides in the membrane. In terms of biological role, may play a role in cilia formation and embryonic patterning. This is Transmembrane protein 107 (tmem107) from Xenopus laevis (African clawed frog).